Consider the following 1404-residue polypeptide: DNA-directed RNA polymerase subunit beta' (1404 aa).

Cys72, Cys74, Cys87, and Cys90 together coordinate Zn(2+). Residues Asp462, Asp464, and Asp466 each coordinate Mg(2+). 4 residues coordinate Zn(2+): Cys816, Cys890, Cys897, and Cys900.

It belongs to the RNA polymerase beta' chain family. The RNAP catalytic core consists of 2 alpha, 1 beta, 1 beta' and 1 omega subunit. When a sigma factor is associated with the core the holoenzyme is formed, which can initiate transcription. Mg(2+) serves as cofactor. The cofactor is Zn(2+).

The enzyme catalyses RNA(n) + a ribonucleoside 5'-triphosphate = RNA(n+1) + diphosphate. Its function is as follows. DNA-dependent RNA polymerase catalyzes the transcription of DNA into RNA using the four ribonucleoside triphosphates as substrates. The polypeptide is DNA-directed RNA polymerase subunit beta' (Azoarcus sp. (strain BH72)).